We begin with the raw amino-acid sequence, 483 residues long: Aspartyl/glutamyl-tRNA(Asn/Gln) amidotransferase subunit B (483 aa).

It belongs to the GatB/GatE family. GatB subfamily. Heterotrimer of A, B and C subunits.

It catalyses the reaction L-glutamyl-tRNA(Gln) + L-glutamine + ATP + H2O = L-glutaminyl-tRNA(Gln) + L-glutamate + ADP + phosphate + H(+). The enzyme catalyses L-aspartyl-tRNA(Asn) + L-glutamine + ATP + H2O = L-asparaginyl-tRNA(Asn) + L-glutamate + ADP + phosphate + 2 H(+). Its function is as follows. Allows the formation of correctly charged Asn-tRNA(Asn) or Gln-tRNA(Gln) through the transamidation of misacylated Asp-tRNA(Asn) or Glu-tRNA(Gln) in organisms which lack either or both of asparaginyl-tRNA or glutaminyl-tRNA synthetases. The reaction takes place in the presence of glutamine and ATP through an activated phospho-Asp-tRNA(Asn) or phospho-Glu-tRNA(Gln). The polypeptide is Aspartyl/glutamyl-tRNA(Asn/Gln) amidotransferase subunit B (Brachyspira hyodysenteriae (strain ATCC 49526 / WA1)).